Reading from the N-terminus, the 299-residue chain is Urease accessory protein UreD (299 aa).

This sequence belongs to the UreD family. As to quaternary structure, ureD, UreF and UreG form a complex that acts as a GTP-hydrolysis-dependent molecular chaperone, activating the urease apoprotein by helping to assemble the nickel containing metallocenter of UreC. The UreE protein probably delivers the nickel.

The protein localises to the cytoplasm. Its function is as follows. Required for maturation of urease via the functional incorporation of the urease nickel metallocenter. The protein is Urease accessory protein UreD of Haloarcula marismortui (strain ATCC 43049 / DSM 3752 / JCM 8966 / VKM B-1809) (Halobacterium marismortui).